We begin with the raw amino-acid sequence, 43 residues long: Protein PsbN (43 aa).

The helical transmembrane segment at 7-24 (VAISISRSLVSFTGYALY) threads the bilayer.

Belongs to the PsbN family.

The protein localises to the plastid. The protein resides in the chloroplast thylakoid membrane. Functionally, may play a role in photosystem I and II biogenesis. This Ginkgo biloba (Ginkgo) protein is Protein PsbN.